A 135-amino-acid polypeptide reads, in one-letter code: Transcription antitermination protein NusB (135 aa).

Belongs to the NusB family.

In terms of biological role, involved in transcription antitermination. Required for transcription of ribosomal RNA (rRNA) genes. Binds specifically to the boxA antiterminator sequence of the ribosomal RNA (rrn) operons. The chain is Transcription antitermination protein NusB from Clostridium acetobutylicum (strain ATCC 824 / DSM 792 / JCM 1419 / IAM 19013 / LMG 5710 / NBRC 13948 / NRRL B-527 / VKM B-1787 / 2291 / W).